Here is a 191-residue protein sequence, read N- to C-terminus: Thymidylate kinase (191 aa).

ATP is bound at residue 7–14 (GIDGVGKS).

Belongs to the thymidylate kinase family.

The catalysed reaction is dTMP + ATP = dTDP + ADP. In terms of biological role, phosphorylation of dTMP to form dTDP in both de novo and salvage pathways of dTTP synthesis. The sequence is that of Thymidylate kinase from Helicobacter acinonychis (strain Sheeba).